Here is a 910-residue protein sequence, read N- to C-terminus: p53-induced death domain-containing protein 1 (910 aa).

Residues 1 to 25 form a disordered region; the sequence is MAATVEGPELEAAAAAGDASEDSDA. A2 bears the N-acetylalanine mark. 7 LRR repeats span residues 126-147, 149-171, 172-194, 195-216, 218-240, 241-263, and 264-285; these read HLAHLDLSFNSLETLPACVLQM, GLGALLLSHNCLSELPEALGALP, ALTFLTVTHNRLQTLPPALGALS, TLQRLDLSQNLLDTLPPEIGGL, SLLELNLASNRLQSLPASLAGLR, SLRLLVLHSNLLASVPADLARLP, and LLTRLDLRDNQLRDLPPELLDA. Residues S299 and S305 each carry the phosphoserine modification. 2 consecutive ZU5 domains span residues 322–454 and 455–596; these read DLDS…VSRP and VSNA…WYTT. Peptidase S68 regions lie at residues 423-452 and 566-594; these read DLETYLEEEAPQRLWAHCQVPHFSWFLVVS and DITAQVVLELTHLYARFQVTHFSWYWLWY. Residues H444, S446, H586, and S588 contribute to the active site. Residues 580–716 form a UPA domain region; the sequence is ARFQVTHFSW…TTTLDREAQA (137 aa). Residues 788-873 enclose the Death domain; sequence TQSNLLSVAG…DVAEEVRAVL (86 aa). The interval 884 to 910 is disordered; that stretch reads IRRMGLAPKDPALPGSSAPQPPEPAQA.

Forms a complex named the PIDDosome with CASP2 and CRADD. Forms a complex with IKBKG and RIPK1. Interacts with FADD and MADD. Post-translationally, undergoes autoproteolytic processing whose extent either directs cells towards survival or apoptotic pathways. Autoproteolytically cleaved into two main fragments PIDD-N and PIDD-C. PIDD-C can be further processed into PIDD-CC, a processing which is enhanced by DNA damage. The cleavage producing PIDD-C is required for translocation of PIDD1 to the nucleus upon DNA damage and activation of NF-kappa-B. PIDD-CC mediates the interaction with CRADD and the cleavage producing PIDD-CC is required for the activation of CASP2. PIDD-N remains associated with PIDD-C and PIDD-CC after cleavage. As to expression, ubiquitous.

The protein localises to the cytoplasm. Its subcellular location is the nucleus. Functionally, component of the DNA damage/stress response pathway that functions downstream of p53/TP53 and can either promote cell survival or apoptosis. Associated with CRADD and the CASP2 caspase, it forms the PIDDosome a complex that activates CASP2 and triggers apoptosis. Associated with IKBKG and RIPK1, it enhances sumoylation and ubiquitination of IKBKG which is important for activation of the transcription factor NF-kappa-B. The chain is p53-induced death domain-containing protein 1 from Homo sapiens (Human).